A 187-amino-acid chain; its full sequence is Signal peptidase I U (187 aa).

The Cytoplasmic segment spans residues 1–16 (MNAKTITLKKKRKIKT). The chain crosses the membrane as a helical span at residues 17 to 37 (IVVLSIIMIAALIFTIRLVFY). The Extracellular portion of the chain corresponds to 38 to 187 (KPFLIEGSSM…YPFGEMRQAK (150 aa)). Residues Ser-46 and Lys-88 contribute to the active site.

This sequence belongs to the peptidase S26 family.

It is found in the cell membrane. It catalyses the reaction Cleavage of hydrophobic, N-terminal signal or leader sequences from secreted and periplasmic proteins.. The chain is Signal peptidase I U (sipU) from Bacillus subtilis (strain 168).